The following is a 396-amino-acid chain: 1-deoxy-D-xylulose 5-phosphate reductoisomerase (396 aa).

NADPH contacts are provided by Thr-15, Gly-16, Ser-17, Ile-18, Gly-41, and Asn-129. Position 130 (Lys-130) interacts with 1-deoxy-D-xylulose 5-phosphate. Glu-131 is a binding site for NADPH. Asp-155 serves as a coordination point for Mn(2+). 1-deoxy-D-xylulose 5-phosphate contacts are provided by Ser-156, Glu-157, Ser-182, and His-205. A Mn(2+)-binding site is contributed by Glu-157. Gly-211 contributes to the NADPH binding site. 4 residues coordinate 1-deoxy-D-xylulose 5-phosphate: Ser-218, Asn-223, Lys-224, and Glu-227. Glu-227 contacts Mn(2+).

It belongs to the DXR family. Mg(2+) is required as a cofactor. It depends on Mn(2+) as a cofactor.

The enzyme catalyses 2-C-methyl-D-erythritol 4-phosphate + NADP(+) = 1-deoxy-D-xylulose 5-phosphate + NADPH + H(+). The protein operates within isoprenoid biosynthesis; isopentenyl diphosphate biosynthesis via DXP pathway; isopentenyl diphosphate from 1-deoxy-D-xylulose 5-phosphate: step 1/6. Functionally, catalyzes the NADPH-dependent rearrangement and reduction of 1-deoxy-D-xylulose-5-phosphate (DXP) to 2-C-methyl-D-erythritol 4-phosphate (MEP). This chain is 1-deoxy-D-xylulose 5-phosphate reductoisomerase, found in Xanthomonas campestris pv. campestris (strain B100).